The sequence spans 1955 residues: 227 kDa spindle- and centromere-associated protein (1955 aa).

Coiled coils occupy residues 82 to 129, 152 to 317, 385 to 1747, and 1770 to 1813; these read KKRI…NDDV, EWAS…ELES, VRNI…LIAL, and ERIV…ERFI. Disordered stretches follow at residues 1865–1896 and 1912–1955; these read PTEQ…SYTY and MTSS…TFSE. The segment covering 1878–1896 has biased composition (polar residues); sequence RTSSTIKSSEGTTRESYTY. Residues 1938–1948 are compositionally biased toward basic residues; the sequence is RKSRPATRKQQ.

It localises to the cytoplasm. It is found in the cytoskeleton. Its subcellular location is the microtubule organizing center. The protein resides in the centrosome. The protein localises to the chromosome. It localises to the centromere. It is found in the kinetochore. Its subcellular location is the spindle. Functionally, may play a role in the organization of the spindle apparatus and its interaction with the centromeres. The polypeptide is 227 kDa spindle- and centromere-associated protein (PUMA1) (Parascaris univalens (Nematode worm)).